The primary structure comprises 151 residues: Acidic phospholipase A2 1 (151 aa).

The first 27 residues, 1-27 (MYPAHLLVLLAVCVSLLGAASIPARPL), serve as a signal peptide directing secretion. Disulfide bonds link cysteine 38/cysteine 104, cysteine 54/cysteine 151, cysteine 56/cysteine 72, cysteine 71/cysteine 132, cysteine 78/cysteine 125, cysteine 88/cysteine 118, and cysteine 111/cysteine 123. Ca(2+)-binding residues include tyrosine 55, glycine 57, and glycine 59. Histidine 75 is a catalytic residue. Ca(2+) is bound at residue aspartate 76. Aspartate 126 is an active-site residue.

It belongs to the phospholipase A2 family. Group I subfamily. D49 sub-subfamily. It depends on Ca(2+) as a cofactor. Expressed by the venom gland.

Its subcellular location is the secreted. The catalysed reaction is a 1,2-diacyl-sn-glycero-3-phosphocholine + H2O = a 1-acyl-sn-glycero-3-phosphocholine + a fatty acid + H(+). Functionally, PLA2 catalyzes the calcium-dependent hydrolysis of the 2-acyl groups in 3-sn-phosphoglycerides. The polypeptide is Acidic phospholipase A2 1 (Tropidechis carinatus (Australian rough-scaled snake)).